A 481-amino-acid polypeptide reads, in one-letter code: Serine--tRNA ligase (481 aa).

284 to 286 is a binding site for L-serine; it reads TAE. Residue 315 to 317 participates in ATP binding; sequence RAE. E338 provides a ligand contact to L-serine. Residue 405-408 coordinates ATP; sequence EISS. An L-serine-binding site is contributed by S440.

It belongs to the class-II aminoacyl-tRNA synthetase family. Type-1 seryl-tRNA synthetase subfamily. Homodimer. The tRNA molecule binds across the dimer.

It localises to the cytoplasm. The catalysed reaction is tRNA(Ser) + L-serine + ATP = L-seryl-tRNA(Ser) + AMP + diphosphate + H(+). The enzyme catalyses tRNA(Sec) + L-serine + ATP = L-seryl-tRNA(Sec) + AMP + diphosphate + H(+). It participates in aminoacyl-tRNA biosynthesis; selenocysteinyl-tRNA(Sec) biosynthesis; L-seryl-tRNA(Sec) from L-serine and tRNA(Sec): step 1/1. In terms of biological role, catalyzes the attachment of serine to tRNA(Ser). Is also able to aminoacylate tRNA(Sec) with serine, to form the misacylated tRNA L-seryl-tRNA(Sec), which will be further converted into selenocysteinyl-tRNA(Sec). This Rhodopseudomonas palustris (strain BisB18) protein is Serine--tRNA ligase.